We begin with the raw amino-acid sequence, 417 residues long: Nucleosome assembly protein (417 aa).

The tract at residues 1–47 (MSDPIRTKPKSSMQIDNAPTPHNTPASVLNPSYLKNGNPVRAQAQEQ) is disordered. The segment covering 10–35 (KSSMQIDNAPTPHNTPASVLNPSYLK) has biased composition (polar residues). Phosphothreonine occurs at positions 20 and 24. Serine 27 is modified (phosphoserine). Lysine 50 participates in a covalent cross-link: Glycyl lysine isopeptide (Lys-Gly) (interchain with G-Cter in ubiquitin). A Phosphothreonine modification is found at threonine 53. Phosphoserine occurs at positions 69, 76, 82, 98, 104, and 140. An interaction with NBA1 region spans residues 143 to 362 (EQPKPEQIAK…IPRAVDWFTG (220 aa)). Residues serine 159 and serine 177 each carry the phosphoserine; by CK2 modification. Residues 330-356 (LEEDLEERLALDYSIGEQLKDKLIPRA) constitute a DNA-binding region (H-T-H motif). Residues 364–417 (ALEFEFEEDEEEADEDEDEEEDDDHGLEDDDGESAEEQDDFAGRPEQAPECKQS) are disordered. The segment covering 367–403 (FEFEEDEEEADEDEDEEEDDDHGLEDDDGESAEEQDD) has biased composition (acidic residues). Serine 397 is modified (phosphoserine; by CK2). A compositionally biased stretch (basic and acidic residues) spans 404-417 (FAGRPEQAPECKQS).

The protein belongs to the nucleosome assembly protein (NAP) family. In terms of assembly, component of the GIN4 complex composed of at least BNI5, CDC3, CDC10, CDC11, CDC12, GIN4, NAP1 and SHS1 which forms a ring at the bud neck. Homodimer (in-vitro). Interacts with the B-type cyclin CLB2. Interacts with 60S ribosomal protein L18 (RPL18A or RPL18B), CKA2, CKI1, eukaryotic elongation factor 1 complex eEF1A (TEF1 or TEF2), FOL1, HSC82, HTA2, HTB2, HTZ1, KAP114, KCC4, NIS1, SSA1, SSA2, SSB1, SSC1, SHM1, SIP5 and TCO89. Interacts with NBA1. Interacts with histone H3/H4 heterodimers. Phosphorylation by CK2 is required for normal progression through S phase. CK2 phosphorylation is not required for correct bud formation nor histone binding.

Its subcellular location is the cytoplasm. The protein localises to the nucleus. The protein resides in the bud neck. In terms of biological role, acidic protein, which assembles histones into an octamer (in vitro). Involved in the regulation of the localization and the function of the septins during mitosis. Involved in the function of B-type cyclins. The protein is Nucleosome assembly protein of Saccharomyces cerevisiae (strain ATCC 204508 / S288c) (Baker's yeast).